We begin with the raw amino-acid sequence, 370 residues long: Putative agmatine deiminase (370 aa).

The Amidino-cysteine intermediate role is filled by C361.

It belongs to the agmatine deiminase family.

The enzyme catalyses agmatine + H2O = N-carbamoylputrescine + NH4(+). The sequence is that of Putative agmatine deiminase from Shewanella sp. (strain MR-4).